The following is a 344-amino-acid chain: Protein RecA (344 aa).

64 to 71 (GPESSGKT) serves as a coordination point for ATP.

This sequence belongs to the RecA family.

The protein resides in the cytoplasm. Its function is as follows. Can catalyze the hydrolysis of ATP in the presence of single-stranded DNA, the ATP-dependent uptake of single-stranded DNA by duplex DNA, and the ATP-dependent hybridization of homologous single-stranded DNAs. It interacts with LexA causing its activation and leading to its autocatalytic cleavage. The chain is Protein RecA from Paramagnetospirillum magnetotacticum (Aquaspirillum magnetotacticum).